The following is a 604-amino-acid chain: MHFPKKKHSGNLSVVELPKEALQDSLTAAQITFKRYAHPNGNAGSAERPRHLKVESAPVVKSEPSLPRMRQPEPRSINHQYSRETLPGHSEAFSVPTTPLQTIHYDVRNKASNSPSSIAAAETAAYLAHTNSFSNRSSGVGSRDPVMDTETKPPRAPSALKNELQLNRMRIPPPSYDNNVRSRSISPQVSYSTSLSSSCSISSDGEETSYREKSTDEAFPPEPSMSSYSLASKASAKASLTDPSQRQQESDYTAMNKLNGGNIIYKGTLPDLIPRSQRKTSKPRFKHRLLRSPEQQQENLSRVYSDQTQNGRAIINTQQNVKLKTTMRRGKYAITDNDETFPYDRKSVSSDSDTDEDSNVMEIKDKKKKSRRSKIKKGLKTTAAVVGSSTSVLPFPHHHHHHHQLHNPNSHHLHTHHHTSSHKFNEDKPWKSHRDLGFITEQERKRYESMWVSNRYSYLRLLPWWPSLANEDDESHLQPLNLPQDGLMLNLVVKDIWYRSNLPRDLLVQIYNMVDTRKDGTLDRKSFIVGMWLVDQCLYGRKLTNELDQRVWNSVDGYVLGTINVKPATSDHYHNANNPLDKPSKLSVRQELKNIKRDLRNVRI.

Disordered stretches follow at residues 38 to 77 (HPNGNAGSAERPRHLKVESAPVVKSEPSLPRMRQPEPRSI), 132 to 249 (SFSN…RQQE), 267 to 299 (GTLPDLIPRSQRKTSKPRFKHRLLRSPEQQQEN), 338 to 380 (DETF…KGLK), and 394 to 428 (PFPHHHHHHHQLHNPNSHHLHTHHHTSSHKFNEDK). Residues 176–185 (YDNNVRSRSI) are compositionally biased toward polar residues. Composition is skewed to low complexity over residues 186 to 203 (SPQVSYSTSLSSSCSISS) and 224 to 240 (SMSSYSLASKASAKASL). 3 stretches are compositionally biased toward basic residues: residues 276–290 (SQRKTSKPRFKHRLL), 366–379 (KKKKSRRSKIKKGL), and 396–421 (PHHHHHHHQLHNPNSHHLHTHHHTSS). One can recognise an EH domain in the interval 469 to 559 (ANEDDESHLQ…RVWNSVDGYV (91 aa)).

Belongs to the IRS4 family. As to quaternary structure, interacts with INP51.

Functionally, with IRS4, acts as a positive regulator of INP51 activity and phosphatidylinositol 4,5-bisphosphate turnover. Negatively regulates signaling through the cell integrity pathway, including the MAP kinase SLT2. This Saccharomyces cerevisiae (strain ATCC 204508 / S288c) (Baker's yeast) protein is Protein TAX4 (TAX4).